A 336-amino-acid chain; its full sequence is Serpentine receptor class gamma-13 (336 aa).

8 helical membrane passes run 32-52 (LKYIIQVTLLSINFILNFLII), 68-88 (FFIIYAADLIMGMYMSLSEIL), 93-113 (FIYVTLLCPILAPYFFTPSIF), 133-153 (VFLSFNRMTCVVFPVGYSAIW), 156-176 (ILTPIIIVLFVLPIGIIWNVL), 210-230 (FIVSLILIIVISGVTLYALLI), 246-266 (TMVLSLEFSFLSVIQIYFAFF), and 277-297 (LLRVMYFTYDLLNFSTTIIFI).

This sequence belongs to the nematode receptor-like protein srg family.

It is found in the membrane. The polypeptide is Serpentine receptor class gamma-13 (srg-13) (Caenorhabditis elegans).